The following is a 1485-amino-acid chain: Sex-determining transformer protein 2 (1485 aa).

Positions 1–28 are cleaved as a signal peptide; sequence MSLRSNKLLVAAVIFTVVTFGLLLTSSI. The next 9 helical transmembrane spans lie at 438–458, 490–510, 584–604, 732–752, 923–943, 950–970, 980–1000, 1033–1053, and 1063–1083; these read VVYFILFIRCVLLIFFAFFAW, IELNSELLGYIILLTIVNTYL, WPFISILFVPITGCYWYFVDI, GILLYGSAVLFVLLSVAVMLI, LLASGILSAFFALIVVIFSIT, LIFSFFVIGSRLEIAAVISLF, DSAVLVGFLVAWAPFYELSLF, AQVFAIVLAASLIIAVVAGVV, and TVILIVVQLVAFGNSIAVLVA. Residues 1131–1271 are interaction with fem-3; it reads DFHIRPTNMS…MLHMIEKVQK (141 aa). Positions 1143–1175 are disordered; it reads YAPPPAKKRAKQTNNETDPEKKEDEPGTSNANN. The helical transmembrane segment at 1181-1201 threads the bilayer; the sequence is AAHRLAILPWHFVLGGIPVDL. Disordered stretches follow at residues 1228-1252, 1275-1306, and 1348-1384; these read SELEDQDDYSSESSVEDVESDPAPE, EKEAKEKVHQVESAQRRAPNFDDPNVAGPSHR, and EMPPVIDRTIPRDPRTEPPNLQECIQQNDDPSLPPHP. Residues 1275–1284 are compositionally biased toward basic and acidic residues; that stretch reads EKEAKEKVHQ. An MX regulatory domain; required for tra-1 binding region spans residues 1401–1422; that stretch reads CEDVYWTYNDGRLPPNVAMPPR. The segment at 1442-1485 is disordered; sequence PPGQPSIPIPAEAMALREERARAHREQEQRDNSQSPSPSPEPGL. Residues 1456 to 1472 show a composition bias toward basic and acidic residues; it reads ALREERARAHREQEQRD.

Interacts with tra-1 and fem-3. As to expression, somatic and germline tissues.

The protein localises to the membrane. In terms of biological role, plays a major role in controlling sexual cell fates. Promotes female development in XX animals where it sequesters one or more of the FEM proteins to the membrane thereby freeing the tra-1 protein (a putative transcription factor) to enter the nucleus and promote female development. In XO animals it acts as a receptor for her-1 which prevents it from binding to FEM proteins thereby repressing the activity of tra-1. Negatively regulates male development when bound to fem-3 and is required together with tra-1 for promoting spermatogenesis. This chain is Sex-determining transformer protein 2, found in Caenorhabditis remanei (Caenorhabditis vulgaris).